Reading from the N-terminus, the 392-residue chain is Formate-dependent phosphoribosylglycinamide formyltransferase (392 aa).

N(1)-(5-phospho-beta-D-ribosyl)glycinamide-binding positions include 22-23 and Glu82; that span reads EL. ATP is bound by residues Arg114, Lys155, 160–165, 195–198, and Glu203; these read SSGKGQ and EGVV. The ATP-grasp domain maps to 119 to 308; that stretch reads RLAAEELQLP…EFALHVRAFL (190 aa). Mg(2+)-binding residues include Glu267 and Glu279. N(1)-(5-phospho-beta-D-ribosyl)glycinamide-binding positions include Asp286, Lys355, and 362-363; that span reads RR.

The protein belongs to the PurK/PurT family. As to quaternary structure, homodimer.

The catalysed reaction is N(1)-(5-phospho-beta-D-ribosyl)glycinamide + formate + ATP = N(2)-formyl-N(1)-(5-phospho-beta-D-ribosyl)glycinamide + ADP + phosphate + H(+). Its pathway is purine metabolism; IMP biosynthesis via de novo pathway; N(2)-formyl-N(1)-(5-phospho-D-ribosyl)glycinamide from N(1)-(5-phospho-D-ribosyl)glycinamide (formate route): step 1/1. In terms of biological role, involved in the de novo purine biosynthesis. Catalyzes the transfer of formate to 5-phospho-ribosyl-glycinamide (GAR), producing 5-phospho-ribosyl-N-formylglycinamide (FGAR). Formate is provided by PurU via hydrolysis of 10-formyl-tetrahydrofolate. The sequence is that of Formate-dependent phosphoribosylglycinamide formyltransferase from Shigella boydii serotype 4 (strain Sb227).